The primary structure comprises 71 residues: MADSSERAAFREVLPKQGLLFTEQTPIPVLCKPKIMPMKSVTLEKLETMQREAQEAVKRQEEEQKLQGGMI.

It belongs to the BBIP10 family.

It is found in the cell projection. Its subcellular location is the cilium. The protein localises to the cytoplasm. Functionally, required for primary cilia assembly. The protein is BBSome-interacting protein 1 (bbip1) of Nematostella vectensis (Starlet sea anemone).